The chain runs to 750 residues: NAD(P)H-quinone oxidoreductase subunit 5, chloroplastic (750 aa).

The next 16 helical transmembrane spans lie at 9-29 (WIIP…LLLF), 39-59 (IWAF…LDLS), 89-109 (IDSL…LVLI), 125-145 (FAYM…SNLI), 147-167 (IYFF…FWFT), 185-205 (GDFG…SLEF), 219-239 (NEMN…GSVA), 267-287 (ATMV…FVLL), 290-310 (IMNT…TLAI), 327-347 (LGYM…FHLI), 354-374 (ALLF…VGYS), 396-416 (FFFL…CFWS), 427-447 (YSPI…FYMF), 554-574 (FSML…ISFS), 606-626 (FFTN…IASF), and 728-748 (ILLY…FVFI).

The protein belongs to the complex I subunit 5 family. As to quaternary structure, NDH is composed of at least 16 different subunits, 5 of which are encoded in the nucleus.

Its subcellular location is the plastid. The protein localises to the chloroplast thylakoid membrane. The enzyme catalyses a plastoquinone + NADH + (n+1) H(+)(in) = a plastoquinol + NAD(+) + n H(+)(out). It carries out the reaction a plastoquinone + NADPH + (n+1) H(+)(in) = a plastoquinol + NADP(+) + n H(+)(out). Its function is as follows. NDH shuttles electrons from NAD(P)H:plastoquinone, via FMN and iron-sulfur (Fe-S) centers, to quinones in the photosynthetic chain and possibly in a chloroplast respiratory chain. The immediate electron acceptor for the enzyme in this species is believed to be plastoquinone. Couples the redox reaction to proton translocation, and thus conserves the redox energy in a proton gradient. This is NAD(P)H-quinone oxidoreductase subunit 5, chloroplastic (ndhF) from Phaseolus vulgaris (Kidney bean).